Here is a 141-residue protein sequence, read N- to C-terminus: MGKKVVGELKLQIPAGKANPSPPVGPALGQRSVNIMEFCKAFNERTKDMGDFNIPVIITIYQDKSFTFITKKPPVTDLIKKAAKITKGSDNPLKNKVGKLTSKQLEEIAQTKMEDLNASDIEAAKKIVAGSARSMGIEIQD.

The protein belongs to the universal ribosomal protein uL11 family. As to quaternary structure, part of the ribosomal stalk of the 50S ribosomal subunit. Interacts with L10 and the large rRNA to form the base of the stalk. L10 forms an elongated spine to which L12 dimers bind in a sequential fashion forming a multimeric L10(L12)X complex. One or more lysine residues are methylated.

Its function is as follows. Forms part of the ribosomal stalk which helps the ribosome interact with GTP-bound translation factors. This Helicobacter hepaticus (strain ATCC 51449 / 3B1) protein is Large ribosomal subunit protein uL11.